The sequence spans 270 residues: HTH-type transcriptional repressor DrrR1 (270 aa).

The span at M1 to T11 shows a compositional bias: low complexity. Positions M1 to I28 are disordered. In terms of domain architecture, HTH tetR-type spans T49 to S109. The segment at residues S72 to V91 is a DNA-binding region (H-T-H motif).

The protein localises to the cytoplasm. With respect to regulation, daunorubicin and doxorubicin can induce dissociation of DrrR1 from its DNA complex. Ampicillin cannot release DrrR1 from the DNA complex at the same concentrations. In terms of biological role, transcriptional regulator that modulates the expression of the drrA2-drrB2 genes, which encode an ABC transporter involved in daunorubicin efflux, in response to intracellular daunorubicin/doxorubicin accumulation. In the absence of daunorubicin or doxorubicin, binds directly to the drrA2-drrB2 promoter region and negatively regulates expression of the genes. In the presence of daunorubicin or doxorubicin, DrrR1 dissociates from DNA, leading to the transcription of the genes. This chain is HTH-type transcriptional repressor DrrR1, found in Streptomyces coeruleorubidus.